Here is a 225-residue protein sequence, read N- to C-terminus: Dynein axonemal assembly factor 19 (225 aa).

Residues 8 to 32 (DFRELERELANALAADQKYSRENDA) are a coiled coil.

It belongs to the DNAAF19/PR46b family. In terms of assembly, homodimer.

It localises to the cytoplasm. The protein localises to the cell projection. Its subcellular location is the cilium. The protein resides in the flagellum. In terms of biological role, dynein-attachment factor required for cilia motility. The protein is Dynein axonemal assembly factor 19 (dnaaf19) of Xenopus tropicalis (Western clawed frog).